A 132-amino-acid chain; its full sequence is MFDGEDLKKIFAMDGFLRNIEFEVSYISEGSIEIKVPLKENLMRVGDIMNGGAIMAISDAIGGLTVMTYGSVINQVTVNFNTEFIRPIGTGPVIFRSSMVRIGKNIAYVDVAAIDGNGQLCSKSMGTYYIYR.

It belongs to the thioesterase PaaI family.

This is Putative esterase Ta0293 from Thermoplasma acidophilum (strain ATCC 25905 / DSM 1728 / JCM 9062 / NBRC 15155 / AMRC-C165).